Here is a 175-residue protein sequence, read N- to C-terminus: NADH-ubiquinone oxidoreductase chain 6 (175 aa).

5 helical membrane-spanning segments follow: residues 1–21 (MMTY…VGFA), 25–45 (SPIY…AIVL), 47–67 (FGGS…MLVV), 88–108 (AVLA…CYIL), and 149–169 (YGTW…LVIM).

This sequence belongs to the complex I subunit 6 family. In terms of assembly, core subunit of respiratory chain NADH dehydrogenase (Complex I) which is composed of 45 different subunits.

The protein resides in the mitochondrion inner membrane. It catalyses the reaction a ubiquinone + NADH + 5 H(+)(in) = a ubiquinol + NAD(+) + 4 H(+)(out). Functionally, core subunit of the mitochondrial membrane respiratory chain NADH dehydrogenase (Complex I) which catalyzes electron transfer from NADH through the respiratory chain, using ubiquinone as an electron acceptor. Essential for the catalytic activity and assembly of complex I. This chain is NADH-ubiquinone oxidoreductase chain 6 (MT-ND6), found in Canis lupus familiaris (Dog).